A 736-amino-acid polypeptide reads, in one-letter code: 1,4-alpha-glucan branching enzyme GlgB (736 aa).

Asp415 functions as the Nucleophile in the catalytic mechanism. Glu470 serves as the catalytic Proton donor.

It belongs to the glycosyl hydrolase 13 family. GlgB subfamily. Monomer.

The enzyme catalyses Transfers a segment of a (1-&gt;4)-alpha-D-glucan chain to a primary hydroxy group in a similar glucan chain.. It participates in glycan biosynthesis; glycogen biosynthesis. Its function is as follows. Catalyzes the formation of the alpha-1,6-glucosidic linkages in glycogen by scission of a 1,4-alpha-linked oligosaccharide from growing alpha-1,4-glucan chains and the subsequent attachment of the oligosaccharide to the alpha-1,6 position. The protein is 1,4-alpha-glucan branching enzyme GlgB of Burkholderia orbicola (strain AU 1054).